The following is a 451-amino-acid chain: Velvet complex subunit 2 (451 aa).

Disordered stretches follow at residues 1–95, 205–312, and 426–451; these read MNTT…PRSI, PGQS…QTNP, and PIRK…DDDY. Composition is skewed to polar residues over residues 18–28, 40–62, and 205–217; these read TMPSLHDTTYR, MPQT…NSLP, and PGQS…SPTY. A Velvet domain is found at 92–428; the sequence is PRSITVDGRK…ATQGIKIPIR (337 aa). Residues 267 to 283 show a composition bias toward low complexity; it reads PQQSNYYYPQPSQSIPS. A compositionally biased stretch (basic and acidic residues) spans 427-445; it reads IRKDGKDGPGKGGKDGSRG.

It belongs to the velvet family. VelB subfamily. In terms of assembly, component of the heterotrimeric velvet complex composed of LAE1, VEL1 and VEL2; VEL1 acting as a bridging protein between LAE1 and VEL2. Forms a heterodimeric complex with VOS1; the formation of the VEL2-VOS1 complex is light-dependent.

It is found in the nucleus. The protein resides in the cytoplasm. In terms of biological role, component of the velvet transcription factor complex that controls sexual/asexual developmental ratio in response to light, promoting sexual development in the darkness while stimulating asexual sporulation under illumination. The velvet complex acts as a global regulator for secondary metabolite gene expression. Component of the VEL2-VOS1 heterodimeric complex that plays a dual role in activating genes associated with spore maturation and repressing certain development-associated genes. The VEL2-VOS1 complex binds DNA through the DNA-binding domain of VOS1 that recognizes an 11-nucleotide consensus sequence 5'-CTGGCCGCGGC-3' consisting of two motifs in the promoters of key developmental regulatory genes. Controls the expression of the oxalic acid and melanin gene clusters. Involved in the resistance to oxidative stress. Required for full virulence. This Botryotinia fuckeliana (strain B05.10) (Noble rot fungus) protein is Velvet complex subunit 2.